A 164-amino-acid polypeptide reads, in one-letter code: ATP synthase subunit b 1 (164 aa).

The chain crosses the membrane as a helical span at residues 4-24 (MELAELWVAVAFFVFVGILLY).

This sequence belongs to the ATPase B chain family. In terms of assembly, F-type ATPases have 2 components, F(1) - the catalytic core - and F(0) - the membrane proton channel. F(1) has five subunits: alpha(3), beta(3), gamma(1), delta(1), epsilon(1). F(0) has three main subunits: a(1), b(2) and c(10-14). The alpha and beta chains form an alternating ring which encloses part of the gamma chain. F(1) is attached to F(0) by a central stalk formed by the gamma and epsilon chains, while a peripheral stalk is formed by the delta and b chains.

Its subcellular location is the cell inner membrane. F(1)F(0) ATP synthase produces ATP from ADP in the presence of a proton or sodium gradient. F-type ATPases consist of two structural domains, F(1) containing the extramembraneous catalytic core and F(0) containing the membrane proton channel, linked together by a central stalk and a peripheral stalk. During catalysis, ATP synthesis in the catalytic domain of F(1) is coupled via a rotary mechanism of the central stalk subunits to proton translocation. Its function is as follows. Component of the F(0) channel, it forms part of the peripheral stalk, linking F(1) to F(0). This is ATP synthase subunit b 1 from Azorhizobium caulinodans (strain ATCC 43989 / DSM 5975 / JCM 20966 / LMG 6465 / NBRC 14845 / NCIMB 13405 / ORS 571).